A 412-amino-acid chain; its full sequence is Phosphoribosylamine--glycine ligase (412 aa).

The ATP-grasp domain occupies 108-309 (KSIMKKYGVP…LAQAIIDILA (202 aa)). 134–190 (LDEKGVPLVIKADGLAAGKGVTVAFDIETAKSALADIFSGSQGKVVIEEFLDGEEFS) contacts ATP. Positions 279 and 281 each coordinate Mg(2+).

This sequence belongs to the GARS family. Mg(2+) is required as a cofactor. Mn(2+) serves as cofactor.

The enzyme catalyses 5-phospho-beta-D-ribosylamine + glycine + ATP = N(1)-(5-phospho-beta-D-ribosyl)glycinamide + ADP + phosphate + H(+). It participates in purine metabolism; IMP biosynthesis via de novo pathway; N(1)-(5-phospho-D-ribosyl)glycinamide from 5-phospho-alpha-D-ribose 1-diphosphate: step 2/2. This Lactococcus lactis subsp. lactis (strain IL1403) (Streptococcus lactis) protein is Phosphoribosylamine--glycine ligase.